A 346-amino-acid polypeptide reads, in one-letter code: MSGNTSSLSYKDAGVDIDAGNALVDRIKGAVKRTRRPEVMGGIGGFGALCELPTKYKEPVLVSGTDGVGTKLRLALDLKKHDTIGIDLVAMCVNDLIVQGGEPLFFLDYYATGKLDVDTAADVVSGIAEGCVQAGCALIGGETAEMPGMYEGDDYDVAGFCVGVVEKADIIDGTKVAAGDALIAVGSSGPHSNGYSLIRKVLEVSGADKSEELEGRTIGEHLLEPTKIYIKSALKMIAEHDIHAISHITGGGFWENIPRVLPEGTKAVIDGKSWEWPAIFNWLQEKGNVETFEMYRTFNCGVGLVVALPKDQADAAVELLKAEGENAWVIGEIANAEAGEEQVEIK.

The protein belongs to the AIR synthase family.

Its subcellular location is the cytoplasm. The enzyme catalyses 2-formamido-N(1)-(5-O-phospho-beta-D-ribosyl)acetamidine + ATP = 5-amino-1-(5-phospho-beta-D-ribosyl)imidazole + ADP + phosphate + H(+). The protein operates within purine metabolism; IMP biosynthesis via de novo pathway; 5-amino-1-(5-phospho-D-ribosyl)imidazole from N(2)-formyl-N(1)-(5-phospho-D-ribosyl)glycinamide: step 2/2. The polypeptide is Phosphoribosylformylglycinamidine cyclo-ligase (Vibrio atlanticus (strain LGP32) (Vibrio splendidus (strain Mel32))).